Reading from the N-terminus, the 315-residue chain is tRNA dimethylallyltransferase (315 aa).

13–20 contributes to the ATP binding site; it reads GPTAVGKT. 15-20 is a substrate binding site; sequence TAVGKT. An interaction with substrate tRNA region spans residues 38 to 41; that stretch reads DSMQ.

Belongs to the IPP transferase family. In terms of assembly, monomer. It depends on Mg(2+) as a cofactor.

It carries out the reaction adenosine(37) in tRNA + dimethylallyl diphosphate = N(6)-dimethylallyladenosine(37) in tRNA + diphosphate. In terms of biological role, catalyzes the transfer of a dimethylallyl group onto the adenine at position 37 in tRNAs that read codons beginning with uridine, leading to the formation of N6-(dimethylallyl)adenosine (i(6)A). This Staphylococcus saprophyticus subsp. saprophyticus (strain ATCC 15305 / DSM 20229 / NCIMB 8711 / NCTC 7292 / S-41) protein is tRNA dimethylallyltransferase.